The chain runs to 92 residues: Transcription factor ILI6 (92 aa).

A disordered region spans residues M1–Q20. Residues R5–L59 enclose the bHLH domain.

Belongs to the bHLH protein family. In terms of assembly, interacts with APG.

The protein resides in the nucleus. Its function is as follows. Atypical and probable non DNA-binding bHLH transcription factor that acts as a positive regulator of grain size. Binds the transcription repressor APG and forms a heterodimer of antagonistic bHLH transcription factors that regulates grain length and weight by controlling cell elongation in lemma and palea. May be involved in the control of lamina inclination through brassinosteroid signaling pathway. This chain is Transcription factor ILI6 (ILI6), found in Oryza sativa subsp. indica (Rice).